The sequence spans 398 residues: tRNA(Ile)-lysidine synthase (398 aa).

Residue 25–30 (SGGVDS) coordinates ATP.

Belongs to the tRNA(Ile)-lysidine synthase family.

The protein localises to the cytoplasm. The enzyme catalyses cytidine(34) in tRNA(Ile2) + L-lysine + ATP = lysidine(34) in tRNA(Ile2) + AMP + diphosphate + H(+). Functionally, ligates lysine onto the cytidine present at position 34 of the AUA codon-specific tRNA(Ile) that contains the anticodon CAU, in an ATP-dependent manner. Cytidine is converted to lysidine, thus changing the amino acid specificity of the tRNA from methionine to isoleucine. The sequence is that of tRNA(Ile)-lysidine synthase from Francisella tularensis subsp. novicida (strain U112).